We begin with the raw amino-acid sequence, 205 residues long: Small ribosomal subunit protein uS4 (205 aa).

The segment at 18 to 46 (NIWGRPKSPVNRREYGPGQHGQRRKGKLS) is disordered. The 61-residue stretch at 94 to 154 (RRLDTVVFRA…EASKQLAVVL (61 aa)) folds into the S4 RNA-binding domain.

This sequence belongs to the universal ribosomal protein uS4 family. Part of the 30S ribosomal subunit. Contacts protein S5. The interaction surface between S4 and S5 is involved in control of translational fidelity.

In terms of biological role, one of the primary rRNA binding proteins, it binds directly to 16S rRNA where it nucleates assembly of the body of the 30S subunit. Functionally, with S5 and S12 plays an important role in translational accuracy. The polypeptide is Small ribosomal subunit protein uS4 (Bradyrhizobium sp. (strain ORS 278)).